Here is a 549-residue protein sequence, read N- to C-terminus: Chaperonin GroEL (549 aa).

ATP is bound by residues 30 to 33 (TLGP), Lys51, 87 to 91 (DGTTT), Gly415, 479 to 481 (NAA), and Asp495.

The protein belongs to the chaperonin (HSP60) family. In terms of assembly, forms a cylinder of 14 subunits composed of two heptameric rings stacked back-to-back. Interacts with the co-chaperonin GroES.

The protein localises to the cytoplasm. It carries out the reaction ATP + H2O + a folded polypeptide = ADP + phosphate + an unfolded polypeptide.. In terms of biological role, together with its co-chaperonin GroES, plays an essential role in assisting protein folding. The GroEL-GroES system forms a nano-cage that allows encapsulation of the non-native substrate proteins and provides a physical environment optimized to promote and accelerate protein folding. This is Chaperonin GroEL from Leptothrix cholodnii (strain ATCC 51168 / LMG 8142 / SP-6) (Leptothrix discophora (strain SP-6)).